Reading from the N-terminus, the 422-residue chain is Lactoyl-CoA dehydratase subunit alpha (422 aa).

It belongs to the FldB/FldC dehydratase alpha/beta subunit family. In terms of assembly, heterodimer of an alpha (LcdA) and a beta (LcdB) subunit. It depends on [4Fe-4S] cluster as a cofactor. FMN is required as a cofactor. Riboflavin serves as cofactor. The cofactor is Mg(2+).

It carries out the reaction (R)-lactoyl-CoA = acryloyl-CoA + H2O. The enzyme catalyses (2R)-hydroxybutanoyl-CoA = (2E)-butenoyl-CoA + H2O. Activated by the LcdC protein. Functionally, involved in the acrylate pathway for the conversion of D-lactic acid to propionic acid. Catalyzes the reversible dehydration of Lactoyl-CoA and 2-hydroxybutyroyl-CoA to acryloyl-CoA and crotonyl-CoA, respectively. This chain is Lactoyl-CoA dehydratase subunit alpha (lcdA), found in Anaerotignum propionicum (Clostridium propionicum).